The following is a 502-amino-acid chain: Lysine--tRNA ligase (502 aa).

The Mg(2+) site is built by Glu-410 and Glu-417.

This sequence belongs to the class-II aminoacyl-tRNA synthetase family. Homodimer. Requires Mg(2+) as cofactor.

It is found in the cytoplasm. The enzyme catalyses tRNA(Lys) + L-lysine + ATP = L-lysyl-tRNA(Lys) + AMP + diphosphate. This is Lysine--tRNA ligase from Photobacterium profundum (strain SS9).